The following is a 93-amino-acid chain: Mitochondrial import inner membrane translocase subunit TIM9 (93 aa).

Residues 43 to 67 (CFVDCVDSFTRKSLQKQEETCVMRC) carry the Twin CX3C motif motif. 2 cysteine pairs are disulfide-bonded: Cys43–Cys67 and Cys47–Cys63.

Belongs to the small Tim family. As to quaternary structure, heterohexamer; composed of 3 copies of TIM9 and 3 copies of TIM10, named soluble 70 kDa complex. The complex associates with the TIM22 component of the TIM22 complex. Interacts with multi-pass transmembrane proteins in transit. Expressed in roots, flowers, young cotyledons and leaves.

It is found in the mitochondrion intermembrane space. Its function is as follows. Mitochondrial intermembrane chaperone that participates in the import and insertion of multi-pass transmembrane proteins into the mitochondrial inner membrane. May also be required for the transfer of beta-barrel precursors from the TOM complex to the sorting and assembly machinery (SAM complex) of the outer membrane. Acts as a chaperone-like protein that protects the hydrophobic precursors from aggregation and guide them through the mitochondrial intermembrane space. This Arabidopsis thaliana (Mouse-ear cress) protein is Mitochondrial import inner membrane translocase subunit TIM9 (TIM9).